Consider the following 117-residue polypeptide: Immunoglobulin heavy variable 1-58 (117 aa).

The N-terminal stretch at 1–19 is a signal peptide; sequence MDWIWRILFLVGAATGAHS. The framework-1 stretch occupies residues 20–44; the sequence is QMQLVQSGPEVKKPGTSVKVSCKAS. The Ig-like domain occupies 20 to 117; the sequence is QMQLVQSGPE…EDTAVYYCAA (98 aa). Cysteine 41 and cysteine 115 are joined by a disulfide. Positions 45–52 are complementarity-determining-1; sequence GFTFTSSA. Residues 53 to 69 are framework-2; the sequence is VQWVRQARGQRLEWIGW. The tract at residues 70-77 is complementarity-determining-2; it reads IVVGSGNT. A framework-3 region spans residues 78-115; it reads NYAQKFQERVTITRDMSTSTAYMELSSLRSEDTAVYYC. Residues 116 to 117 form a complementarity-determining-3 region; sequence AA.

As to quaternary structure, immunoglobulins are composed of two identical heavy chains and two identical light chains; disulfide-linked.

The protein localises to the secreted. The protein resides in the cell membrane. In terms of biological role, v region of the variable domain of immunoglobulin heavy chains that participates in the antigen recognition. Immunoglobulins, also known as antibodies, are membrane-bound or secreted glycoproteins produced by B lymphocytes. In the recognition phase of humoral immunity, the membrane-bound immunoglobulins serve as receptors which, upon binding of a specific antigen, trigger the clonal expansion and differentiation of B lymphocytes into immunoglobulins-secreting plasma cells. Secreted immunoglobulins mediate the effector phase of humoral immunity, which results in the elimination of bound antigens. The antigen binding site is formed by the variable domain of one heavy chain, together with that of its associated light chain. Thus, each immunoglobulin has two antigen binding sites with remarkable affinity for a particular antigen. The variable domains are assembled by a process called V-(D)-J rearrangement and can then be subjected to somatic hypermutations which, after exposure to antigen and selection, allow affinity maturation for a particular antigen. This chain is Immunoglobulin heavy variable 1-58, found in Homo sapiens (Human).